A 343-amino-acid chain; its full sequence is Ion-translocating oxidoreductase complex subunit D (343 aa).

Transmembrane regions (helical) follow at residues 24–44 (VLLA…AGTL), 45–65 (YNLA…LAAR), 69–91 (LAFF…ALPP), and 124–144 (AMLG…SWPA). FMN phosphoryl threonine is present on Thr-171. 5 helical membrane-spanning segments follow: residues 197 to 217 (FGGA…LYLL), 221 to 241 (LITW…SLLF), 251 to 271 (GSPL…FIVT), 284 to 304 (LVFG…GGYP), and 305 to 325 (DAVA…DYYT).

The protein belongs to the NqrB/RnfD family. As to quaternary structure, the complex is composed of six subunits: RnfA, RnfB, RnfC, RnfD, RnfE and RnfG. FMN is required as a cofactor.

The protein localises to the cell inner membrane. In terms of biological role, part of a membrane-bound complex that couples electron transfer with translocation of ions across the membrane. The sequence is that of Ion-translocating oxidoreductase complex subunit D from Ectopseudomonas mendocina (strain ymp) (Pseudomonas mendocina).